A 329-amino-acid polypeptide reads, in one-letter code: DNA-directed RNA polymerase subunit alpha (329 aa).

The alpha N-terminal domain (alpha-NTD) stretch occupies residues Met1–Arg235. Positions Phe249–Glu329 are alpha C-terminal domain (alpha-CTD).

This sequence belongs to the RNA polymerase alpha chain family. In terms of assembly, homodimer. The RNAP catalytic core consists of 2 alpha, 1 beta, 1 beta' and 1 omega subunit. When a sigma factor is associated with the core the holoenzyme is formed, which can initiate transcription.

It carries out the reaction RNA(n) + a ribonucleoside 5'-triphosphate = RNA(n+1) + diphosphate. Functionally, DNA-dependent RNA polymerase catalyzes the transcription of DNA into RNA using the four ribonucleoside triphosphates as substrates. The polypeptide is DNA-directed RNA polymerase subunit alpha (Buchnera aphidicola subsp. Schizaphis graminum (strain Sg)).